We begin with the raw amino-acid sequence, 488 residues long: Diacylglycerol O-acyltransferase 1 (488 aa).

Residues 1 to 57 are disordered; that stretch reads MGDRGSSRRRRTGSRPSSHGGGGPAAAEEEVRDAAAGPDVGAAGDAPAPAPNKDGDA. The Cytoplasmic portion of the chain corresponds to 1-83; the sequence is MGDRGSSRRR…SLFSSDSGFS (83 aa). The segment at 1–91 is involved in homomerization; sequence MGDRGSSRRR…FSNYRGILNW (91 aa). Ser17 and Ser18 each carry phosphoserine. Residues 34 to 47 show a composition bias toward low complexity; the sequence is AAAGPDVGAAGDAP. Residues 84–118 traverse the membrane as a helical segment; it reads NYRGILNWCVVMLILSNARLFLENLIKYGILVDPI. Over 119–130 the chain is Lumenal; the sequence is QVVSLFLKDPYS. Residues 119–130 form an extracellular loop 1 (EL1) region; sequence QVVSLFLKDPYS. A helical transmembrane segment spans residues 131–156; sequence WPAPCLVIAANVFAVAAFQVEKRLAV. Positions 131 to 488 are MBOAT fold; it reads WPAPCLVIAA…LNYEAPAAEA (358 aa). The Cytoplasmic portion of the chain corresponds to 157–161; it reads GALTE. Residues 162 to 184 traverse the membrane as a helical segment; the sequence is QAGLLLHVANLATILCFPAAVVL. Over 185–191 the chain is Lumenal; it reads LVESITP. Residues 192 to 223 form a helical membrane-spanning segment; it reads VGSLLALMAHTILFLKLFSYRDVNSWCRRARA. Residues 224–273 lie on the Cytoplasmic side of the membrane; the sequence is KAASAGKKASSAAAPHTVSYPDNLTYRDLYYFLFAPTLCYELNFPRSPRI. The segment at 224–276 is intracellular loop 1 (IL1); it reads KAASAGKKASSAAAPHTVSYPDNLTYRDLYYFLFAPTLCYELNFPRSPRIRKR. Residues 274–308 form a helical membrane-spanning segment; the sequence is RKRFLLRRILEMLFFTQLQVGLIQQWMVPTIQNSM. The Lumenal segment spans residues 309-315; the sequence is KPFKDMD. A helical membrane pass occupies residues 316–353; it reads YSRIIERLLKLAVPNHLIWLIFFYWLFHSCLNAVAELM. Residues 354–399 are Cytoplasmic-facing; it reads QFGDREFYRDWWNSESVTYFWQNWNIPVHKWCIRHFYKPMLRRGSS. Positions 354–399 are intracellular loop 2 (IL2); that stretch reads QFGDREFYRDWWNSESVTYFWQNWNIPVHKWCIRHFYKPMLRRGSS. The FYXDWWN motif motif lies at 360 to 366; that stretch reads FYRDWWN. An acyl-CoA contacts are provided by residues 374-382, Tyr390, and Arg404; that span reads WQNWNIPVH. Positions 380-394 are amphipathic helix (AH); it reads PVHKWCIRHFYKPML. Residues 400–420 form a helical membrane-spanning segment; that stretch reads KWMARTGVFLASAFFHEYLVS. His415 is a catalytic residue. Topologically, residues 421-428 are lumenal; that stretch reads VPLRMFRL. Residues 429 to 447 form a helical membrane-spanning segment; sequence WAFTGMMAQIPLAWFVGRF. At 448 to 449 the chain is on the cytoplasmic side; the sequence is FQ. Residues 450 to 481 traverse the membrane as a helical segment; the sequence is GNYGNAAVWLSLIIGQPIAVLMYVHDYYVLNY. Tyr477 is a binding site for an acyl-CoA. Topologically, residues 482–488 are lumenal; that stretch reads EAPAAEA.

Belongs to the membrane-bound acyltransferase family. Sterol o-acyltransferase subfamily. Homodimer or homotetramer; both forms have similar enzymatic activities.

It is found in the endoplasmic reticulum membrane. It carries out the reaction an acyl-CoA + a 1,2-diacyl-sn-glycerol = a triacyl-sn-glycerol + CoA. The enzyme catalyses all-trans-retinol + an acyl-CoA = an all-trans-retinyl ester + CoA. The catalysed reaction is 2-(9Z-octadecenoyl)-glycerol + (9Z)-octadecenoyl-CoA = 1,2-di-(9Z-octadecenoyl)-sn-glycerol + CoA. It catalyses the reaction 1,2-di-(9Z-octadecenoyl)-sn-glycerol + (9Z)-octadecenoyl-CoA = 1,2,3-tri-(9Z-octadecenoyl)-glycerol + CoA. It carries out the reaction all-trans-retinol + hexadecanoyl-CoA = all-trans-retinyl hexadecanoate + CoA. The enzyme catalyses 1-O-(9Z-octadecenyl)-glycerol + (9Z)-octadecenoyl-CoA = 1-O-(9Z-octadecyl)-3-(9Z-octadecenoyl)-glycerol + CoA. The catalysed reaction is 1-O-(9Z-octadecyl)-3-(9Z-octadecenoyl)-glycerol + (9Z)-octadecenoyl-CoA = 1-O-(9Z-octadecenyl)-2,3-di-(9Z-octadecenoyl)glycerol + CoA. It catalyses the reaction 1-(9Z-octadecenoyl)-glycerol + (9Z)-octadecenoyl-CoA = 1,2-di-(9Z-octadecenoyl)-glycerol + CoA. It carries out the reaction 1,2-di-(9Z-octadecenoyl)-glycerol + (9Z)-octadecenoate + H(+) = 1,2,3-tri-(9Z-octadecenoyl)-glycerol + H2O. The enzyme catalyses 1-octadecanoyl-2-(5Z,8Z,11Z,14Z-eicosatetraenoyl)-sn-glycerol + (9Z)-octadecenoyl-CoA = 1-octadecanoyl-2-(5Z,8Z,11Z,14Z)-eicosatetraenoyl-3-(9Z)-octadecenoyl-sn-glycerol + CoA. The catalysed reaction is hexadecane-1,2-diol + 2 hexadecanoyl-CoA = 1,2-O,O-dihexadecanoyl-1,2-hexadecanediol + 2 CoA. It catalyses the reaction hexadecane-1,2-diol + hexadecanoyl-CoA = 2-hydroxyhexadecyl hexadecanoate + CoA. It carries out the reaction 2-(9Z-octadecenoyl)-glycerol + hexadecanoyl-CoA = 1-hexadecanoyl-2-(9Z-octadecenoyl)-sn-glycerol + CoA. The enzyme catalyses 1,2-di-(9Z-octadecenoyl)-sn-glycerol + hexadecanoyl-CoA = 1,2-di-(9Z)-octadecenoyl-3-hexadecanoyl-sn-glycerol + CoA. The catalysed reaction is hexadecan-1-ol + hexadecanoyl-CoA = hexadecanyl hexadecanoate + CoA. It catalyses the reaction 13-cis-retinol + hexadecanoyl-CoA = 13-cis-retinyl hexadecanoate + CoA. It carries out the reaction 1,3-di-(9Z-octadecenoyl)-glycerol + (9Z)-octadecenoyl-CoA = 1,2,3-tri-(9Z-octadecenoyl)-glycerol + CoA. The enzyme catalyses 2,3-di-(9Z)-octadecenoyl-sn-glycerol + (9Z)-octadecenoyl-CoA = 1,2,3-tri-(9Z-octadecenoyl)-glycerol + CoA. It participates in lipid metabolism; glycerolipid metabolism. With respect to regulation, XP620 is a selective DGAT1 inhibitor. Functionally, catalyzes the terminal and only committed step in triacylglycerol synthesis by using diacylglycerol and fatty acyl CoA as substrates. Highly expressed in epithelial cells of the small intestine and its activity is essential for the absorption of dietary fats. In liver, plays a role in esterifying exogenous fatty acids to glycerol, and is required to synthesize fat for storage. Also present in female mammary glands, where it produces fat in the milk. May be involved in VLDL (very low density lipoprotein) assembly. In contrast to DGAT2 it is not essential for survival. Functions as the major acyl-CoA retinol acyltransferase (ARAT) in the skin, where it acts to maintain retinoid homeostasis and prevent retinoid toxicity leading to skin and hair disorders. Exhibits additional acyltransferase activities, includin acyl CoA:monoacylglycerol acyltransferase (MGAT), wax monoester and wax diester synthases. Also able to use 1-monoalkylglycerol (1-MAkG) as an acyl acceptor for the synthesis of monoalkyl-monoacylglycerol (MAMAG). This is Diacylglycerol O-acyltransferase 1 from Homo sapiens (Human).